A 126-amino-acid chain; its full sequence is MNLIEQLEQEEIARLGKTIPEFAPGDTVVVQVKVKEGNRERLQAYEGVVIAKRNRGLNSGFTVRKISSGEGVERTFQTYSPLVASIEVKRRGDVRRAKLYYLRERSGKSARIKEKLVRKEKPVVAA.

Belongs to the bacterial ribosomal protein bL19 family.

Functionally, this protein is located at the 30S-50S ribosomal subunit interface and may play a role in the structure and function of the aminoacyl-tRNA binding site. The protein is Large ribosomal subunit protein bL19 of Dechloromonas aromatica (strain RCB).